A 273-amino-acid chain; its full sequence is Large ribosomal subunit protein uL2 (273 aa).

The interval 213-261 (WLGKRPQSRGVAMNPVDHPHGGGEGKSSGGRHPVTPWGVPTKGYKTRVN) is disordered.

It belongs to the universal ribosomal protein uL2 family. As to quaternary structure, part of the 50S ribosomal subunit. Forms a bridge to the 30S subunit in the 70S ribosome.

One of the primary rRNA binding proteins. Required for association of the 30S and 50S subunits to form the 70S ribosome, for tRNA binding and peptide bond formation. It has been suggested to have peptidyltransferase activity; this is somewhat controversial. Makes several contacts with the 16S rRNA in the 70S ribosome. The polypeptide is Large ribosomal subunit protein uL2 (Syntrophotalea carbinolica (strain DSM 2380 / NBRC 103641 / GraBd1) (Pelobacter carbinolicus)).